Reading from the N-terminus, the 653-residue chain is Phospholipid-transporting ATPase VD (653 aa).

The Cytoplasmic portion of the chain corresponds to Met1–Asn375. ATP-binding positions include Glu14, Phe56, Lys80, Arg124, Thr204, Gly205, Asp206, Gly259–Thr266, Arg293, and Lys299. Residue Asp319 participates in Mg(2+) binding. ATP contacts are provided by Asn322 and Asp323. Asp323 serves as a coordination point for Mg(2+). The helical transmembrane segment at Met376–Phe396 threads the bilayer. Residues Phe397–Asp407 are Exoplasmic loop-facing. Residues Tyr408–Val428 form a helical membrane-spanning segment. The Cytoplasmic segment spans residues Leu429 to Thr458. Residues Phe459 to Thr480 traverse the membrane as a helical segment. Over Tyr481–Asp487 the chain is Exoplasmic loop. Residues Ile488–Glu510 form a helical membrane-spanning segment. The Cytoplasmic portion of the chain corresponds to Ser511–Trp516. A helical transmembrane segment spans residues Ile517–Gly537. Residues Ala538–Glu555 are Exoplasmic loop-facing. Residues His556 to Tyr580 form a helical membrane-spanning segment. Residues Arg581–Asp653 lie on the Cytoplasmic side of the membrane.

This sequence belongs to the cation transport ATPase (P-type) (TC 3.A.3) family. Type IV subfamily. As to quaternary structure, component of a P4-ATPase flippase complex which consists of a catalytic alpha subunit ATP10A and an accessory beta subunit TMEM30A. It depends on Mg(2+) as a cofactor. In terms of processing, autophosphorylated at the conserved aspartate of the P-type ATPase signature sequence.

The protein resides in the cell membrane. Its subcellular location is the endoplasmic reticulum membrane. The enzyme catalyses ATP + H2O + phospholipidSide 1 = ADP + phosphate + phospholipidSide 2.. It carries out the reaction a beta-D-glucosyl-(1&lt;-&gt;1')-N-acylsphing-4-enine(out) + ATP + H2O = a beta-D-glucosyl-(1&lt;-&gt;1')-N-acylsphing-4-enine(in) + ADP + phosphate + H(+). In terms of biological role, catalytic component of a P4-ATPase flippase complex, which catalyzes the hydrolysis of ATP coupled to the transport of glucosylceramide (GlcCer) from the outer to the inner leaflet of the plasma membrane. The chain is Phospholipid-transporting ATPase VD (ATP10D) from Macaca fascicularis (Crab-eating macaque).